The following is an 801-amino-acid chain: Protocadherin beta-8 (801 aa).

A signal peptide spans 1-29 (MEASGKLICRQRQVLFSFLLLGLSLAGAA). Topologically, residues 30–691 (EPRSYSVVEE…GQADSLTVYL (662 aa)) are extracellular. 5 consecutive Cadherin domains span residues 36 to 134 (VVEE…SPVF), 139 to 243 (MLVK…APEF), 248 to 348 (YRVQ…APEV), 353 to 452 (FTSP…APAF), and 457 to 562 (YTLF…SPFV). Cysteine 97 and cysteine 103 are disulfide-bonded. N-linked (GlcNAc...) asparagine glycosylation is found at asparagine 419 and asparagine 437. Asparagine 568 carries N-linked (GlcNAc...) asparagine glycosylation. The Cadherin 6 domain occupies 569-672 (SSAPCTELVP…LVDGFSQPYL (104 aa)). Residues 692–710 (VVALASVSSLFLFSVLLFV) traverse the membrane as a helical segment. The Cytoplasmic portion of the chain corresponds to 711-801 (AVRLCRRSRA…NGFGFSLQLK (91 aa)).

Forms homodimers in trans (molecules expressed by two different cells). Forms promiscuous heterodimers in cis (at the plasma membrane of the same cell) with other protocadherins.

The protein localises to the cell membrane. Functionally, calcium-dependent cell-adhesion protein involved in cells self-recognition and non-self discrimination. Thereby, it is involved in the establishment and maintenance of specific neuronal connections in the brain. The sequence is that of Protocadherin beta-8 from Pan troglodytes (Chimpanzee).